A 108-amino-acid polypeptide reads, in one-letter code: Envelope small membrane protein (108 aa).

The Virion surface portion of the chain corresponds to 1–10 (MNLLNKSLEE). Residues 11 to 31 (NGSFLTALYIIVGFLALYLLG) form a helical membrane-spanning segment. At 32–108 (RALQAFVQAA…QDAQRDKLYS (77 aa)) the chain is on the intravirion side. Residues 88–108 (NGWNNKNPANFQDAQRDKLYS) form a disordered region. Over residues 89–100 (GWNNKNPANFQD) the composition is skewed to polar residues.

Belongs to the gammacoronaviruses E protein family. In terms of assembly, homooligomer. Interacts with the M membrane protein in the budding compartment of the host cell, which is located between endoplasmic reticulum and the Golgi complex. The cytoplasmic tails of both proteins are important for this function. Interacts with Nucleoprotein.

It is found in the host Golgi apparatus membrane. Plays a central role in virus morphogenesis and assembly. Acts as a viroporin and self-assembles in host membranes forming pentameric protein-lipid pores that allow ion transport. Also plays a role in the induction of apoptosis. This chain is Envelope small membrane protein, found in Gallus gallus (Chicken).